Consider the following 1049-residue polypeptide: Carbamoyl phosphate synthase large chain (1049 aa).

The carboxyphosphate synthetic domain stretch occupies residues 1 to 399; sequence MRESVRKVLV…SLQKAVRMLD (399 aa). ATP is bound by residues Arg-127, Arg-167, Gly-173, Gly-174, Lys-206, Leu-208, Glu-213, Gly-239, Val-240, His-241, Gln-282, and Glu-296. Residues 131–325 form the ATP-grasp 1 domain; it reads RETMINVGLP…LAYVSAKLAL (195 aa). Mg(2+) contacts are provided by Gln-282, Glu-296, and Asn-298. Residues Gln-282, Glu-296, and Asn-298 each coordinate Mn(2+). Residues 400-548 are oligomerization domain; it reads IGEPGVVGGK…LTYNGTEDDI (149 aa). The segment at 549 to 930 is carbamoyl phosphate synthetic domain; sequence EFSEAGNKLL…LKSWLSSSPN (382 aa). Residues 674–864 enclose the ATP-grasp 2 domain; it reads SKLLDKLGIK…IISLALDGIL (191 aa). ATP-binding residues include Arg-710, Lys-749, Leu-751, Glu-756, Gly-780, Val-781, His-782, Ser-783, Gln-823, and Glu-835. Mg(2+)-binding residues include Gln-823, Glu-835, and Asn-837. Gln-823, Glu-835, and Asn-837 together coordinate Mn(2+). In terms of domain architecture, MGS-like spans 930 to 1049; it reads NKIPNKEGIA…YEISEYGAGI (120 aa). The tract at residues 931–1049 is allosteric domain; the sequence is KIPNKEGIAL…YEISEYGAGI (119 aa).

This sequence belongs to the CarB family. As to quaternary structure, composed of two chains; the small (or glutamine) chain promotes the hydrolysis of glutamine to ammonia, which is used by the large (or ammonia) chain to synthesize carbamoyl phosphate. Tetramer of heterodimers (alpha,beta)4. Mg(2+) is required as a cofactor. Mn(2+) serves as cofactor.

It carries out the reaction hydrogencarbonate + L-glutamine + 2 ATP + H2O = carbamoyl phosphate + L-glutamate + 2 ADP + phosphate + 2 H(+). The catalysed reaction is hydrogencarbonate + NH4(+) + 2 ATP = carbamoyl phosphate + 2 ADP + phosphate + 2 H(+). The protein operates within amino-acid biosynthesis; L-arginine biosynthesis; carbamoyl phosphate from bicarbonate: step 1/1. It functions in the pathway pyrimidine metabolism; UMP biosynthesis via de novo pathway; (S)-dihydroorotate from bicarbonate: step 1/3. In terms of biological role, large subunit of the glutamine-dependent carbamoyl phosphate synthetase (CPSase). CPSase catalyzes the formation of carbamoyl phosphate from the ammonia moiety of glutamine, carbonate, and phosphate donated by ATP, constituting the first step of 2 biosynthetic pathways, one leading to arginine and/or urea and the other to pyrimidine nucleotides. The large subunit (synthetase) binds the substrates ammonia (free or transferred from glutamine from the small subunit), hydrogencarbonate and ATP and carries out an ATP-coupled ligase reaction, activating hydrogencarbonate by forming carboxy phosphate which reacts with ammonia to form carbamoyl phosphate. The polypeptide is Carbamoyl phosphate synthase large chain (Sulfurisphaera tokodaii (strain DSM 16993 / JCM 10545 / NBRC 100140 / 7) (Sulfolobus tokodaii)).